The sequence spans 236 residues: tRNA (guanine-N(7)-)-methyltransferase (236 aa).

S-adenosyl-L-methionine-binding residues include Glu43, Asp68, Asn102, and Asn125. Substrate-binding residues include Lys129 and Asp161.

It belongs to the class I-like SAM-binding methyltransferase superfamily. TrmB family.

It catalyses the reaction guanosine(46) in tRNA + S-adenosyl-L-methionine = N(7)-methylguanosine(46) in tRNA + S-adenosyl-L-homocysteine. It participates in tRNA modification; N(7)-methylguanine-tRNA biosynthesis. Catalyzes the formation of N(7)-methylguanine at position 46 (m7G46) in tRNA. In Ruminiclostridium cellulolyticum (strain ATCC 35319 / DSM 5812 / JCM 6584 / H10) (Clostridium cellulolyticum), this protein is tRNA (guanine-N(7)-)-methyltransferase.